The sequence spans 292 residues: tRNA(Ile)-lysidine synthase (292 aa).

Residue 32–37 coordinates ATP; the sequence is SGGADS.

Belongs to the tRNA(Ile)-lysidine synthase family.

It localises to the cytoplasm. It carries out the reaction cytidine(34) in tRNA(Ile2) + L-lysine + ATP = lysidine(34) in tRNA(Ile2) + AMP + diphosphate + H(+). In terms of biological role, ligates lysine onto the cytidine present at position 34 of the AUA codon-specific tRNA(Ile) that contains the anticodon CAU, in an ATP-dependent manner. Cytidine is converted to lysidine, thus changing the amino acid specificity of the tRNA from methionine to isoleucine. The protein is tRNA(Ile)-lysidine synthase of Corynebacterium diphtheriae (strain ATCC 700971 / NCTC 13129 / Biotype gravis).